The following is a 164-amino-acid chain: UPF0225 protein Shewmr7_1921 (164 aa).

Belongs to the UPF0225 family.

This chain is UPF0225 protein Shewmr7_1921, found in Shewanella sp. (strain MR-7).